Consider the following 130-residue polypeptide: Small ribosomal subunit protein uS8 (130 aa).

It belongs to the universal ribosomal protein uS8 family. In terms of assembly, part of the 30S ribosomal subunit. Contacts proteins S5 and S12.

Its function is as follows. One of the primary rRNA binding proteins, it binds directly to 16S rRNA central domain where it helps coordinate assembly of the platform of the 30S subunit. In Pseudomonas fluorescens (strain ATCC BAA-477 / NRRL B-23932 / Pf-5), this protein is Small ribosomal subunit protein uS8.